The sequence spans 72 residues: MKADIHPKYAEVNVTCSCGHVFTTRSTLGKPELHVEVCAACHPFYTGKQKIVDTAGRVERFRQKYGNVQRLG.

4 residues coordinate Zn(2+): Cys16, Cys18, Cys38, and Cys41.

This sequence belongs to the bacterial ribosomal protein bL31 family. Type A subfamily. As to quaternary structure, part of the 50S ribosomal subunit. Zn(2+) is required as a cofactor.

In terms of biological role, binds the 23S rRNA. The sequence is that of Large ribosomal subunit protein bL31 from Azoarcus sp. (strain BH72).